We begin with the raw amino-acid sequence, 408 residues long: Cell division protein FtsZ 2 (408 aa).

GTP contacts are provided by residues 130–132, Glu169, Arg173, and Asp216; that span reads GTG.

It belongs to the FtsZ family. Homodimer. Polymerizes to form a dynamic ring structure in a strictly GTP-dependent manner. Interacts directly with several other division proteins.

It localises to the cytoplasm. Essential cell division protein that forms a contractile ring structure (Z ring) at the future cell division site. The regulation of the ring assembly controls the timing and the location of cell division. One of the functions of the FtsZ ring is to recruit other cell division proteins to the septum to produce a new cell wall between the dividing cells. Binds GTP and shows GTPase activity. The sequence is that of Cell division protein FtsZ 2 from Pyrococcus furiosus (strain ATCC 43587 / DSM 3638 / JCM 8422 / Vc1).